The following is a 610-amino-acid chain: UvrABC system protein C (610 aa).

Residues Ser-16–Val-94 enclose the GIY-YIG domain. The 36-residue stretch at Asp-204–Val-239 folds into the UVR domain.

The protein belongs to the UvrC family. Interacts with UvrB in an incision complex.

It localises to the cytoplasm. In terms of biological role, the UvrABC repair system catalyzes the recognition and processing of DNA lesions. UvrC both incises the 5' and 3' sides of the lesion. The N-terminal half is responsible for the 3' incision and the C-terminal half is responsible for the 5' incision. This Salmonella schwarzengrund (strain CVM19633) protein is UvrABC system protein C.